Consider the following 406-residue polypeptide: Cysteine desulfurase (406 aa).

The residue at position 226 (lysine 226) is an N6-(pyridoxal phosphate)lysine. Cysteine 364 functions as the Cysteine persulfide intermediate in the catalytic mechanism.

The protein belongs to the class-V pyridoxal-phosphate-dependent aminotransferase family. Csd subfamily. As to quaternary structure, homodimer. Interacts with SufE and the SufBCD complex composed of SufB, SufC and SufD. The interaction with SufE is required to mediate the direct transfer of the sulfur atom from the S-sulfanylcysteine. Requires pyridoxal 5'-phosphate as cofactor.

The protein localises to the cytoplasm. The enzyme catalyses (sulfur carrier)-H + L-cysteine = (sulfur carrier)-SH + L-alanine. The catalysed reaction is L-selenocysteine + AH2 = hydrogenselenide + L-alanine + A + H(+). Its pathway is cofactor biosynthesis; iron-sulfur cluster biosynthesis. Functionally, cysteine desulfurases mobilize the sulfur from L-cysteine to yield L-alanine, an essential step in sulfur metabolism for biosynthesis of a variety of sulfur-containing biomolecules. Component of the suf operon, which is activated and required under specific conditions such as oxidative stress and iron limitation. Acts as a potent selenocysteine lyase in vitro, that mobilizes selenium from L-selenocysteine. Selenocysteine lyase activity is however unsure in vivo. This Klebsiella pneumoniae (strain 342) protein is Cysteine desulfurase.